The primary structure comprises 242 residues: UDP-2,3-diacylglucosamine hydrolase (242 aa).

Residues Asp7, His9, Asp40, Asn78, and His113 each coordinate Mn(2+). 78 to 79 (NR) is a substrate binding site. The substrate site is built by Asp121, Ser159, Thr163, Lys166, and His194. Residues His194 and His196 each coordinate Mn(2+).

It belongs to the LpxH family. Mn(2+) serves as cofactor.

It is found in the cell inner membrane. It catalyses the reaction UDP-2-N,3-O-bis[(3R)-3-hydroxytetradecanoyl]-alpha-D-glucosamine + H2O = 2-N,3-O-bis[(3R)-3-hydroxytetradecanoyl]-alpha-D-glucosaminyl 1-phosphate + UMP + 2 H(+). Its pathway is glycolipid biosynthesis; lipid IV(A) biosynthesis; lipid IV(A) from (3R)-3-hydroxytetradecanoyl-[acyl-carrier-protein] and UDP-N-acetyl-alpha-D-glucosamine: step 4/6. Its function is as follows. Hydrolyzes the pyrophosphate bond of UDP-2,3-diacylglucosamine to yield 2,3-diacylglucosamine 1-phosphate (lipid X) and UMP by catalyzing the attack of water at the alpha-P atom. Involved in the biosynthesis of lipid A, a phosphorylated glycolipid that anchors the lipopolysaccharide to the outer membrane of the cell. This chain is UDP-2,3-diacylglucosamine hydrolase, found in Ectopseudomonas mendocina (strain ymp) (Pseudomonas mendocina).